Consider the following 233-residue polypeptide: H-2 class II histocompatibility antigen, A-S alpha chain (233 aa).

The alpha-1 stretch occupies residues 1–88 (EDDIEADHVG…KRSNSTPATN (88 aa)). Residues 1–195 (EDDIEADHVG…IPAPMSELTE (195 aa)) lie on the Extracellular side of the membrane. The tract at residues 89-182 (EAPQATVFPK…GLEEPVLKHW (94 aa)) is alpha-2. In terms of domain architecture, Ig-like C1-type spans 91-183 (PQATVFPKSP…LEEPVLKHWE (93 aa)). An intrachain disulfide couples Cys-111 to Cys-167. N-linked (GlcNAc...) asparagine glycosylation occurs at Asn-122. Residues 183 to 195 (EPEIPAPMSELTE) are connecting peptide. Residues 196-221 (TVVCALGLSVGLVGIVVGTIFIIQGL) traverse the membrane as a helical segment. The Cytoplasmic segment spans residues 222–233 (RSGGTSRHPGPL).

It belongs to the MHC class II family.

It is found in the membrane. This Mus musculus (Mouse) protein is H-2 class II histocompatibility antigen, A-S alpha chain (H2-Aa).